The sequence spans 160 residues: Arginine repressor (160 aa).

The protein belongs to the ArgR family.

The protein localises to the cytoplasm. The protein operates within amino-acid biosynthesis; L-arginine biosynthesis [regulation]. Its function is as follows. Regulates arginine biosynthesis genes. This is Arginine repressor from Anaeromyxobacter sp. (strain K).